We begin with the raw amino-acid sequence, 161 residues long: Cytochrome c-type biogenesis protein CcmE (161 aa).

At 1–8 the chain is on the cytoplasmic side; that stretch reads MNPRRKKR. The chain crosses the membrane as a helical; Signal-anchor for type II membrane protein span at residues 9–29; the sequence is LGLILALFVGISATVGLMLYA. Residues 30–161 lie on the Periplasmic side of the membrane; sequence LNQNMDLFYT…TEQQKQGTGQ (132 aa). 2 residues coordinate heme: H129 and Y133. The interval 142–161 is disordered; that stretch reads MKKTHEPLQYTEQQKQGTGQ. The span at 151–161 shows a compositional bias: polar residues; the sequence is YTEQQKQGTGQ.

The protein belongs to the CcmE/CycJ family.

It localises to the cell inner membrane. Heme chaperone required for the biogenesis of c-type cytochromes. Transiently binds heme delivered by CcmC and transfers the heme to apo-cytochromes in a process facilitated by CcmF and CcmH. In Aliivibrio fischeri (strain ATCC 700601 / ES114) (Vibrio fischeri), this protein is Cytochrome c-type biogenesis protein CcmE.